The following is a 536-amino-acid chain: CRISPR-associated DNA-binding protein Cas12m (536 aa).

The recognition domain (REC1-N) stretch occupies residues 1-59 (MPFGKKARHVKAYQFGADAPQEGMEAVLEQHRLRTDYYNALVEMELRQREERTALLANL). Residues 60–105 (AAESGLESPNQVYERLKAAGEKGIRKHPEYVAARERQKALYGHPRL) form a recognition domain (REC2) region. Residues 106 to 159 (LELQSRQREERNALRRSFGAKGLYSSNYLDVERAFDKARQSPELRFRRYSPHEG) form a recognition domain (REC1-C) region. The tract at residues 160–257 (RLAVLYTEGL…RWTVSVVVEV (98 aa)) is wedge domain (WED). The segment at 258-270 (EGPPVASPTGRGA) is linker. A ruvC-I region spans residues 271–481 (VAVDLGWRRV…QRGKPVRKLN (211 aa)). A target nucleic-acid binding (TNB) region spans residues 482 to 516 (PAHTTTDCHACGGALVGDPAKELRLYCPTCERFYD). 4 residues coordinate Zn(2+): cysteine 489, cysteine 492, cysteine 508, and cysteine 511. The ruvC-II stretch occupies residues 517 to 536 (QDENAARNLLRRAQEVQAQV). Aspartate 518 contributes to the Mg(2+) binding site.

Belongs to the CRISPR-associated DNA-binding protein Cas12m family. It depends on Mg(2+) as a cofactor. Requires Zn(2+) as cofactor.

Pre-crRNA processing is inhibited by EDTA. In terms of biological role, CRISPR (clustered regularly interspaced short palindromic repeat), is an adaptive immune system that provides protection against mobile genetic elements (viruses, transposable elements and conjugative plasmids). CRISPR clusters contain sequences complementary to antecedent mobile elements and target invading nucleic acids. CRISPR clusters are transcribed and processed into CRISPR RNA (crRNA). Recognizes a short motif in the CRISPR repeat sequences (the 5' PAM or protospacer adjacent motif, 5'-TT/CN-3' in this organism) to help distinguish self versus nonself, as targets within the bacterial CRISPR locus do not have PAMs. Cas12m-crRNA binds DNA in a PAM-dependent, crRNA-guided fashion. DNA-binding probably inhibits transcription, leading to gene silencing. No dsDNA, ssDNA or RNA nuclease activity is seen for the crRNA-Cas12m complex. Upon expression in E.coli as a CRISPR region preferentially binds to its associated crRNA. Is required to process pre-crRNA to mature crRNA without a tracrRNA; processing is Mg(2+)-dependent and does not require the predicted RuvC domain catalytic site. The protein is CRISPR-associated DNA-binding protein Cas12m of Allomeiothermus silvanus (strain ATCC 700542 / DSM 9946 / NBRC 106475 / NCIMB 13440 / VI-R2) (Thermus silvanus).